Consider the following 702-residue polypeptide: Polyribonucleotide nucleotidyltransferase (702 aa).

The Mg(2+) site is built by D484 and D490. A KH domain is found at 551 to 610 (PHIESFKIAVEKIGALIGPGGKTVKSLSDQYRVTINTDSDGTVTVSGRDAQSVFDAKVAV). Residues 620–688 (GRVYQGVVKR…RMGRLNLSYI (69 aa)) enclose the S1 motif domain.

This sequence belongs to the polyribonucleotide nucleotidyltransferase family. Requires Mg(2+) as cofactor.

Its subcellular location is the cytoplasm. It carries out the reaction RNA(n+1) + phosphate = RNA(n) + a ribonucleoside 5'-diphosphate. Functionally, involved in mRNA degradation. Catalyzes the phosphorolysis of single-stranded polyribonucleotides processively in the 3'- to 5'-direction. The chain is Polyribonucleotide nucleotidyltransferase from Treponema pallidum (strain Nichols).